The sequence spans 227 residues: Endo-1,4-beta-xylanase 2 (227 aa).

Positions 1–36 (MVSIKSVLAAATAVSSALAAPFDFVPRDNSTALQAR) are cleaved as a signal peptide. A glycan (N-linked (GlcNAc...) asparagine) is linked at N29. Positions 37–225 (QVTPNAEGWH…SSGESDIYVQ (189 aa)) constitute a GH11 domain. The active-site Nucleophile is E121. E212 acts as the Proton donor in catalysis.

Belongs to the glycosyl hydrolase 11 (cellulase G) family.

It localises to the secreted. It catalyses the reaction Endohydrolysis of (1-&gt;4)-beta-D-xylosidic linkages in xylans.. It participates in glycan degradation; xylan degradation. Endo-1,4-beta-xylanase involved in the hydrolysis of xylan, a major structural heterogeneous polysaccharide found in plant biomass representing the second most abundant polysaccharide in the biosphere, after cellulose. This Humicola insolens (Soft-rot fungus) protein is Endo-1,4-beta-xylanase 2 (xyn2).